A 389-amino-acid chain; its full sequence is Succinate--CoA ligase [ADP-forming] subunit beta (389 aa).

The 236-residue stretch at 9–244 (KEILRKFGVA…LDEEDPAEVE (236 aa)) folds into the ATP-grasp domain. Residues K46, 53 to 55 (GRG), E99, A102, and E107 each bind ATP. 2 residues coordinate Mg(2+): N199 and D213. Substrate-binding positions include N264 and 321 to 323 (GIM).

The protein belongs to the succinate/malate CoA ligase beta subunit family. As to quaternary structure, heterotetramer of two alpha and two beta subunits. It depends on Mg(2+) as a cofactor.

It carries out the reaction succinate + ATP + CoA = succinyl-CoA + ADP + phosphate. The enzyme catalyses GTP + succinate + CoA = succinyl-CoA + GDP + phosphate. Its pathway is carbohydrate metabolism; tricarboxylic acid cycle; succinate from succinyl-CoA (ligase route): step 1/1. In terms of biological role, succinyl-CoA synthetase functions in the citric acid cycle (TCA), coupling the hydrolysis of succinyl-CoA to the synthesis of either ATP or GTP and thus represents the only step of substrate-level phosphorylation in the TCA. The beta subunit provides nucleotide specificity of the enzyme and binds the substrate succinate, while the binding sites for coenzyme A and phosphate are found in the alpha subunit. The chain is Succinate--CoA ligase [ADP-forming] subunit beta from Paraburkholderia xenovorans (strain LB400).